Consider the following 62-residue polypeptide: Alpha-conotoxin-like Qc1.2 (62 aa).

Positions 1 to 21 are cleaved as a signal peptide; it reads MGMRMMFTVFLLVALATTVAS. Positions 22 to 48 are excised as a propeptide; that stretch reads FTLDRASNGRNAAADDKPSDWIALAIK. Gln-49 is subject to Pyrrolidone carboxylic acid. Cystine bridges form between Cys-50–Cys-56 and Cys-51–Cys-61.

It belongs to the conotoxin A superfamily. As to expression, expressed by the venom duct.

It is found in the secreted. Functionally, alpha-conotoxins bind to the nicotinic acetylcholine receptors (nAChR) and inhibit them. This synthetic peptide (10 uM) selectively, but weakly inhibits both rat neuronal alpha-3-beta-2/CHRNA3-CHRNB2 (63%) and alpha-3-beta-4/CHRNA3-CHRNB4 (37%) subtypes of nAChR. The polypeptide is Alpha-conotoxin-like Qc1.2 (Conus quercinus (Oak cone)).